The sequence spans 168 residues: Diphosphoinositol polyphosphate phosphohydrolase 1 (168 aa).

Position 1 is an N-acetylmethionine (Met-1). Residues Arg-10, 18-20 (KKR), and 39-41 (SSR) contribute to the substrate site. The 128-residue stretch at 17 to 144 (YKKRAACLCF…VQASYFETLR (128 aa)) folds into the Nudix hydrolase domain. Residues Gly-50 and Glu-66 each coordinate Mg(2+). The short motif at 51–72 (GGMEPEEEPSVAAVREVCEEAG) is the Nudix box element. The Proton acceptor role is filled by Glu-69. Glu-70 provides a ligand contact to Mg(2+). Residues 89–91 (RKH), Arg-115, and Lys-133 contribute to the substrate site.

The protein belongs to the Nudix hydrolase family. DIPP subfamily. Monomer. Mg(2+) serves as cofactor. It depends on Mn(2+) as a cofactor. The cofactor is Zn(2+). As to expression, present in heart, lung, liver and spleen (at protein level). Widely expressed.

It localises to the cytoplasm. The protein localises to the nucleus. The enzyme catalyses diphospho-myo-inositol polyphosphate + H2O = myo-inositol polyphosphate + phosphate.. It carries out the reaction 5-diphospho-1D-myo-inositol 1,2,3,4,6-pentakisphosphate + H2O = 1D-myo-inositol hexakisphosphate + phosphate + H(+). It catalyses the reaction 3,5-bis(diphospho)-1D-myo-inositol 1,2,4,6-tetrakisphosphate + H2O = 3-diphospho-1D-myo-inositol 1,2,4,5,6-pentakisphosphate + phosphate + 2 H(+). The catalysed reaction is [phosphate](n+1) + n H2O = (n+1) phosphate + n H(+). The enzyme catalyses P(1),P(5)-bis(5'-adenosyl) pentaphosphate + H2O = ADP + ATP + 2 H(+). It carries out the reaction P(1),P(6)-bis(5'-adenosyl) hexaphosphate + H2O = 2 ATP + 2 H(+). It catalyses the reaction P(1),P(4)-bis(5'-adenosyl) tetraphosphate + H2O = AMP + ATP + 2 H(+). The catalysed reaction is a 5'-end (N(7)-methyl 5'-triphosphoguanosine)-ribonucleoside in mRNA + H2O = N(7)-methyl-GMP + a 5'-end diphospho-ribonucleoside in mRNA + 2 H(+). The enzyme catalyses a 5'-end (N(7)-methyl 5'-triphosphoguanosine)-ribonucleoside in mRNA + H2O = N(7)-methyl-GDP + a 5'-end phospho-ribonucleoside in mRNA + 2 H(+). Its function is as follows. Cleaves a beta-phosphate from the diphosphate groups in PP-InsP5 (diphosphoinositol pentakisphosphate) and [PP]2-InsP4 (bisdiphosphoinositol tetrakisphosphate), suggesting that it may play a role in signal transduction. InsP6 (inositol hexakisphosphate) is not a substrate. Also able to catalyze the hydrolysis of dinucleoside oligophosphates, with diadenosine 5',5'''-P1,P6-hexaphosphate (Ap6A) and diadenosine 5',5'''- P1,P5-pentaphosphate (Ap5A) being the preferred substrates. The major reaction products are ADP and p4a from Ap6A and ADP and ATP from Ap5A. Also able to hydrolyze 5- phosphoribose 1-diphosphate. Acts as a negative regulator of the ERK1/2 pathway. Acts as a decapping enzyme that can hydrolyze both monomethylated and unmethylated capped RNAs. Hydrolyzes monomethylated capped RNA after both the alpha- and beta-phosphates generating m7GMP + ppRNA and m7GDP + pRNA. Modulates the stability of a subset of mRNAs implicated in cell motility. Divalent cations zinc, magnesium and manganese determine its substrate specificity. Exhibits diphosphoinositol polyphosphate phosphohydrolase in the presence of magnesium ions, diadenosine hexaphosphate hydrolase activity in the presence of manganese ions and endopolyphosphatase activity in the presence of zinc ions. Plays an important role in limiting DNA damage and maintaining cell survival upon oxidative stress via its endopolyphosphatase activity. In Mus musculus (Mouse), this protein is Diphosphoinositol polyphosphate phosphohydrolase 1.